Reading from the N-terminus, the 514-residue chain is MAGGAFIDESGHGGDYEGRVTAFVMITCIVAAMGGLLFGYDIGISGGVISMEDFLTKFFPDVLRQMQNKRGRETEYCKYDNELLTLFTSSLYLAALFASFLASTITRLFGRKVSMVIGSLAFLSGALLNGLAINLEMLIIGRLFLGVGVGFANQSVPLYLSEMAPAKIRGALNIGFQLAITIGILAANIVNYVTPKLQNGIGWRLSLGLAGVPAVMMLVGCFFLPDTPNSILERGNKEKAKEMLQKIRGTMEVEHEFNELCNACEAAKKVKHPWTNIMQARYRPQLTFCTFIPFFQQLTGINVIMFYAPVLFKTIGFGNDASLISAVITGLVNVLSTIVSIYSVDKFGRRALFLQGGFQMIVTQIAVGSMIGWKFGFNGEGNLSGVDADIILALICLYVAGFAWSWGPLGWLVPSEICPLEIRSAGQSLNVSVNMFFTFFIGQFFLTMLCHMKFGLFYFFAGMVLIMTIFIYFLLPETKGVPIEEMGKVWKEHRYWGKYSNNDDGDDVDDDAYF.

Topologically, residues 1 to 19 (MAGGAFIDESGHGGDYEGR) are cytoplasmic. The helical transmembrane segment at 20–40 (VTAFVMITCIVAAMGGLLFGY) threads the bilayer. Over 41 to 82 (DIGISGGVISMEDFLTKFFPDVLRQMQNKRGRETEYCKYDNE) the chain is Extracellular. Residues 83–103 (LLTLFTSSLYLAALFASFLAS) form a helical membrane-spanning segment. Over 104 to 112 (TITRLFGRK) the chain is Cytoplasmic. A helical transmembrane segment spans residues 113–133 (VSMVIGSLAFLSGALLNGLAI). Residues 134–137 (NLEM) are Extracellular-facing. The chain crosses the membrane as a helical span at residues 138–158 (LIIGRLFLGVGVGFANQSVPL). At 159–169 (YLSEMAPAKIR) the chain is on the cytoplasmic side. The helical transmembrane segment at 170–190 (GALNIGFQLAITIGILAANIV) threads the bilayer. Topologically, residues 191–204 (NYVTPKLQNGIGWR) are extracellular. Residues 205–225 (LSLGLAGVPAVMMLVGCFFLP) traverse the membrane as a helical segment. Over 226–290 (DTPNSILERG…RYRPQLTFCT (65 aa)) the chain is Cytoplasmic. A helical transmembrane segment spans residues 291-311 (FIPFFQQLTGINVIMFYAPVL). At 312–320 (FKTIGFGND) the chain is on the extracellular side. The chain crosses the membrane as a helical span at residues 321–341 (ASLISAVITGLVNVLSTIVSI). Topologically, residues 342-350 (YSVDKFGRR) are cytoplasmic. A helical membrane pass occupies residues 351-371 (ALFLQGGFQMIVTQIAVGSMI). Over 372–389 (GWKFGFNGEGNLSGVDAD) the chain is Extracellular. A helical transmembrane segment spans residues 390 to 410 (IILALICLYVAGFAWSWGPLG). Topologically, residues 411-428 (WLVPSEICPLEIRSAGQS) are cytoplasmic. A helical membrane pass occupies residues 429–449 (LNVSVNMFFTFFIGQFFLTML). The Extracellular segment spans residues 450–453 (CHMK). The helical transmembrane segment at 454–474 (FGLFYFFAGMVLIMTIFIYFL) threads the bilayer. Over 475–514 (LPETKGVPIEEMGKVWKEHRYWGKYSNNDDGDDVDDDAYF) the chain is Cytoplasmic.

This sequence belongs to the major facilitator superfamily. Sugar transporter (TC 2.A.1.1) family. In terms of tissue distribution, specifically expressed in germinating pollen and pollen tube (at protein level).

It is found in the cell membrane. With respect to regulation, inhibited by uncouplers such as 2,4-dinitrophenol and carbonyl cyanide-m-chlorophenyl-hydrazone. Mediates an active uptake of hexoses, probably by sugar/hydrogen symport. Can transport glucose, galactose, mannose, xylose and 3-O-methylglucose, but not fructose and ribose. This is Sugar transport protein 11 (STP11) from Arabidopsis thaliana (Mouse-ear cress).